The chain runs to 217 residues: 2-phospho-L-lactate guanylyltransferase (217 aa).

This sequence belongs to the CofC family. In terms of assembly, homodimer.

It carries out the reaction (2S)-2-phospholactate + GTP + H(+) = (2S)-lactyl-2-diphospho-5'-guanosine + diphosphate. It functions in the pathway cofactor biosynthesis; coenzyme F420 biosynthesis. In terms of biological role, guanylyltransferase that catalyzes the activation of (2S)-2-phospholactate (2-PL) as (2S)-lactyl-2-diphospho-5'-guanosine, via the condensation of 2-PL with GTP. It is involved in the biosynthesis of coenzyme F420, a hydride carrier cofactor. In Halorubrum lacusprofundi (strain ATCC 49239 / DSM 5036 / JCM 8891 / ACAM 34), this protein is 2-phospho-L-lactate guanylyltransferase.